The following is a 522-amino-acid chain: Putative zinc finger protein 286B (522 aa).

Positions 1–30 are disordered; that stretch reads METDLAEMPEKGVLSSQDSPHFQEKSTEEG. C2H2-type zinc fingers lie at residues 244–266, 272–294, 299–321, 327–349, 355–377, 383–405, 411–433, 439–461, 467–489, and 495–517; these read HKCNDCGELFTCHSVHIQHQRVH, YTCNECGKSFSHRANLTKHQRTH, FECRECKKTFTESSSLATHQRIH, YECNECGKGFNRSTHLVQHQLIH, YECNECDKAFIHSSALIKHQRTH, YKCQECGKAFSHCSSLTKHQRVH, YECSECGKTFSQSTHLVQHQRIH, YECSECGKTFSQSSNFAKHQRIH, YKCSECGKAFIHSSALIQHQRTH, and FRCNECGKSFKCSSSLIRHQRVH.

It belongs to the krueppel C2H2-type zinc-finger protein family.

The protein localises to the nucleus. Functionally, may be involved in transcriptional regulation. This is Putative zinc finger protein 286B (ZNF286B) from Homo sapiens (Human).